The sequence spans 451 residues: Vitamin D3 receptor (451 aa).

The segment at residues 44-112 is a DNA-binding region (nuclear receptor); it reads PRICGVCGDR…RLKRCVDIGM (69 aa). Positions 47, 50, 64, 67, 83, 89, 99, and 102 each coordinate Zn(2+). 2 NR C4-type zinc fingers span residues 47–67 and 83–107; these read CGVC…CEGC and CPFN…LKRC. Hinge stretches follow at residues 113-149 and 120-149; these read MKEF…KLSE and DEEV…KLSE. The NR LBD domain maps to 150-447; that stretch reads EQQKVIDTLL…LTPLVLEVFG (298 aa). Position 261 (S261) interacts with calcitriol. The tract at residues 270-288 is interaction with coactivator LXXLL motif; that stretch reads KMIPGFRDLTAEDQIALLK. The calcitriol site is built by R298, S302, H329, and H421. The 9aaTAD signature appears at 440-448; it reads PLVLEVFGN.

The protein belongs to the nuclear hormone receptor family. NR1 subfamily. In terms of assembly, homodimer in the absence of bound vitamin D3. Heterodimer with RXRA after vitamin D3 binding. In terms of tissue distribution, expressed in kidney and intestine.

Its subcellular location is the nucleus. The protein resides in the cytoplasm. Nuclear receptor for calcitriol, the active form of vitamin D3 which mediates the action of this vitamin on cells. Enters the nucleus upon vitamin D3 binding where it forms heterodimers with the retinoid X receptor/RXR. The VDR-RXR heterodimers bind to specific response elements on DNA and activate the transcription of vitamin D3-responsive target genes. Plays a central role in calcium homeostasis. Also functions as a receptor for the secondary bile acid lithocholic acid (LCA) and its metabolites. In Gallus gallus (Chicken), this protein is Vitamin D3 receptor (VDR).